A 59-amino-acid polypeptide reads, in one-letter code: Large ribosomal subunit protein bL32 (59 aa).

This sequence belongs to the bacterial ribosomal protein bL32 family.

The protein is Large ribosomal subunit protein bL32 of Synechococcus sp. (strain RCC307).